Here is a 135-residue protein sequence, read N- to C-terminus: HTH-type transcriptional repressor RghR (135 aa).

The HTH cro/C1-type domain maps to 8-63 (LRALREERKLTVNQLATYSGVSAAGISRIENGKRGVPKPATIKKLAEALKIPYEGL). The H-T-H motif DNA-binding region spans 19 to 38 (VNQLATYSGVSAAGISRIEN).

Functionally, represses the expression of yvaM and both rapG and rapH. Binds directly to the promoter regions of yvaM, rapG and rapH. The chain is HTH-type transcriptional repressor RghR (rghR) from Bacillus subtilis (strain 168).